The primary structure comprises 1345 residues: Mediator of RNA polymerase II transcription subunit 13 (1345 aa).

Disordered regions lie at residues 363–387 and 402–537; these read KSQTNQQQTSSNSKVSPSDAASPYP and FMAS…AESG. Positions 364–375 are enriched in low complexity; it reads SQTNQQQTSSNS. Over residues 406 to 415 the composition is skewed to polar residues; the sequence is PSVSGNSNEL. Acidic residues predominate over residues 469 to 482; the sequence is LFGEEDEDEDDADL. Positions 486–501 are enriched in polar residues; sequence SNNDSTGESNANNSKG.

Belongs to the Mediator complex subunit 13 family. In terms of assembly, component of the SRB8-11 complex, which itself associates with the Mediator complex.

It is found in the nucleus. Its function is as follows. Component of the SRB8-11 complex. The SRB8-11 complex is a regulatory module of the Mediator complex which is itself involved in regulation of basal and activated RNA polymerase II-dependent transcription. The SRB8-11 complex may be involved in the transcriptional repression of a subset of genes regulated by Mediator. It may inhibit the association of the Mediator complex with RNA polymerase II to form the holoenzyme complex. In Candida glabrata (strain ATCC 2001 / BCRC 20586 / JCM 3761 / NBRC 0622 / NRRL Y-65 / CBS 138) (Yeast), this protein is Mediator of RNA polymerase II transcription subunit 13 (SSN2).